Consider the following 167-residue polypeptide: 16S rRNA aminocarboxypropyltransferase (167 aa).

Residues Thr-17, Val-62, Leu-84, Tyr-99, and Ser-103 each coordinate S-adenosyl-L-methionine.

The protein belongs to the TDD superfamily. TSR3 family.

Its subcellular location is the cytoplasm. It catalyses the reaction an N(1)-methylpseudouridine in rRNA + S-adenosyl-L-methionine = N(1)-methyl-N(3)-[(3S)-3-amino-3-carboxypropyl]pseudouridine in rRNA + S-methyl-5'-thioadenosine + H(+). In terms of biological role, aminocarboxypropyltransferase that catalyzes the aminocarboxypropyl transfer on pseudouridine corresponding to position 914 in M.jannaschii 16S rRNA. It constitutes the last step in biosynthesis of the hypermodified N1-methyl-N3-(3-amino-3-carboxypropyl) pseudouridine (m1acp3-Psi). This Sulfurisphaera tokodaii (strain DSM 16993 / JCM 10545 / NBRC 100140 / 7) (Sulfolobus tokodaii) protein is 16S rRNA aminocarboxypropyltransferase.